The chain runs to 156 residues: Flagellar assembly factor FliW (156 aa).

This sequence belongs to the FliW family. Interacts with translational regulator CsrA and flagellin(s).

Its subcellular location is the cytoplasm. Its function is as follows. Acts as an anti-CsrA protein, binds CsrA and prevents it from repressing translation of its target genes, one of which is flagellin. Binds to flagellin and participates in the assembly of the flagellum. This Pseudothermotoga lettingae (strain ATCC BAA-301 / DSM 14385 / NBRC 107922 / TMO) (Thermotoga lettingae) protein is Flagellar assembly factor FliW.